A 284-amino-acid polypeptide reads, in one-letter code: Serine/threonine-protein phosphatase Pgam5, mitochondrial (284 aa).

The helical transmembrane segment at 8–24 threads the bilayer; that stretch reads LGVPTATLAVGTLLLGD.

The protein belongs to the phosphoglycerate mutase family. BPG-dependent PGAM subfamily. In terms of assembly, interacts with skn-1 isoforms a and c.

It is found in the mitochondrion outer membrane. It carries out the reaction O-phospho-L-seryl-[protein] + H2O = L-seryl-[protein] + phosphate. The catalysed reaction is O-phospho-L-threonyl-[protein] + H2O = L-threonyl-[protein] + phosphate. Its function is as follows. Displays phosphatase activity for serine/threonine residues. Has apparently no phosphoglycerate mutase activity. The protein is Serine/threonine-protein phosphatase Pgam5, mitochondrial (pgam-5) of Caenorhabditis elegans.